Consider the following 489-residue polypeptide: COX3 mRNA-specific translational activator PET494 (489 aa).

The protein localises to the mitochondrion inner membrane. Functionally, required for the expression of the mitochondrial gene for cytochrome c oxidase subunit III (COX3). This is COX3 mRNA-specific translational activator PET494 (PET494) from Saccharomyces cerevisiae (strain ATCC 204508 / S288c) (Baker's yeast).